Consider the following 147-residue polypeptide: RxLR effector protein Avr3a (147 aa).

A signal peptide spans 1–21 (MRLAIMLSATAVAINFATCSA). The RxLR-dEER signature appears at 44–59 (RLLRKNEENEETSEER). N6-acetyllysine is present on Lys-48. Residues 77 to 147 (ALTKRADAKK…YMMHLGLTGY (71 aa)) are effector domain.

The protein belongs to the RxLR effector family. As to quaternary structure, forms homodimers via the RxLR-dEER motif. Interacts with host E3 ligase CMPG1. Interacts with host DRP2. In terms of processing, proteolytically cleaved. The cleavage site directly after the RxLR sequence and the high conservation among other effector proteins suggest that the RxLR motif might play a crucial role in the intracellular processing before secretion. Glycosylated. Post-translationally, N-acetylated at Lys-48 after cleavage.

Its subcellular location is the secreted. It is found in the host cytoplasm. It localises to the host endosome. Multifunctional effector that can suppress host BAK1/SERK3-mediated immunity through at least two different pathways. Manipulates plant immunity by targeting and stabilizing host E3 ligase CMPG1. Preventing the normal 26S proteasome-dependent degradation of potato CMPG1, and thus potentially of its protein substrates in the host cell, further abolishes host cell death during the biotrophic phase of infection. Also associates with the dynamin-related protein 2 (DRP2), a plant GTPase involved in immune receptor-mediated endocytosis. The Avr3A(KI) form is recognized by R3a which triggers R3a-mediated hypersensitivity and suppresses INF1-induced cell death. The chain is RxLR effector protein Avr3a from Phytophthora infestans (Potato late blight agent).